A 154-amino-acid chain; its full sequence is Nuclear cap-binding protein subunit 2 (154 aa).

MRNA contacts are provided by residues Tyr10, Tyr33, 102–106 (RVDWD), 113–117 (RQYGR), and 123–124 (QV). The RRM domain maps to 30–108 (CTLYVGNLSF…RLIRVDWDAG (79 aa)).

Belongs to the RRM NCBP2 family. As to quaternary structure, component of the nuclear cap-binding complex (CBC), a heterodimer composed of Cbp80 and Cbp20 that interacts with m7GpppG-capped RNA. Interacts with Ars2.

The protein localises to the nucleus. Component of the cap-binding complex (CBC), which binds co-transcriptionally to the 5' cap of pre-mRNAs and is involved in various processes such as pre-mRNA splicing and RNA-mediated gene silencing (RNAi). The CBC complex is involved in miRNA-mediated RNA interference via its interaction with Ars2 and is required for primary microRNAs (miRNAs) processing. Also involved in innate immunity via the short interfering RNAs (siRNAs) processing machinery by restricting the viral RNA production. In the CBC complex, Cbp20 recognizes and binds capped RNAs (m7GpppG-capped RNA) but requires Cbp80 to stabilize the movement of its N-terminal loop and lock the CBC into a high affinity cap-binding state with the cap structure. In Drosophila melanogaster (Fruit fly), this protein is Nuclear cap-binding protein subunit 2 (Cbp20).